We begin with the raw amino-acid sequence, 171 residues long: Disulfide bond formation protein B (171 aa).

At methionine 1–valine 8 the chain is on the cytoplasmic side. Residues serine 9–tyrosine 25 traverse the membrane as a helical segment. Over leucine 26–valine 43 the chain is Periplasmic. Residues cysteine 35 and cysteine 38 are joined by a disulfide bond. The chain crosses the membrane as a helical span at residues glycine 44–proline 60. Topologically, residues valine 61–arginine 67 are cytoplasmic. The helical transmembrane segment at phenylalanine 68–glycine 85 threads the bilayer. At arginine 86 to valine 142 the chain is on the periplasmic side. An intrachain disulfide couples cysteine 101 to cysteine 128. The chain crosses the membrane as a helical span at residues tryptophan 143–arginine 161. Topologically, residues phenylalanine 162 to lysine 171 are cytoplasmic.

The protein belongs to the DsbB family.

It localises to the cell inner membrane. Functionally, required for disulfide bond formation in some periplasmic proteins. Acts by oxidizing the DsbA protein. The protein is Disulfide bond formation protein B of Acinetobacter baumannii (strain ATCC 17978 / DSM 105126 / CIP 53.77 / LMG 1025 / NCDC KC755 / 5377).